Consider the following 184-residue polypeptide: Adenine phosphoribosyltransferase (184 aa).

This sequence belongs to the purine/pyrimidine phosphoribosyltransferase family. Homodimer.

The protein resides in the cytoplasm. It catalyses the reaction AMP + diphosphate = 5-phospho-alpha-D-ribose 1-diphosphate + adenine. It participates in purine metabolism; AMP biosynthesis via salvage pathway; AMP from adenine: step 1/1. In terms of biological role, catalyzes a salvage reaction resulting in the formation of AMP, that is energically less costly than de novo synthesis. This is Adenine phosphoribosyltransferase from Shewanella baltica (strain OS223).